Reading from the N-terminus, the 149-residue chain is 3-dehydroquinate dehydratase (149 aa).

Tyrosine 26 functions as the Proton acceptor in the catalytic mechanism. Substrate contacts are provided by asparagine 78, histidine 84, and aspartate 91. The active-site Proton donor is histidine 104. Residues leucine 105–serine 106 and arginine 115 contribute to the substrate site.

The protein belongs to the type-II 3-dehydroquinase family. As to quaternary structure, homododecamer.

The catalysed reaction is 3-dehydroquinate = 3-dehydroshikimate + H2O. The protein operates within metabolic intermediate biosynthesis; chorismate biosynthesis; chorismate from D-erythrose 4-phosphate and phosphoenolpyruvate: step 3/7. Catalyzes a trans-dehydration via an enolate intermediate. This Polynucleobacter necessarius subsp. necessarius (strain STIR1) protein is 3-dehydroquinate dehydratase.